We begin with the raw amino-acid sequence, 353 residues long: Photosystem II D2 protein (353 aa).

The residue at position 2 (Thr-2) is an N-acetylthreonine. A Phosphothreonine modification is found at Thr-2. Residues 41-61 (CAYFALGGWFTGTTFVTSWYT) form a helical membrane-spanning segment. Residue His-118 coordinates chlorophyll a. The helical transmembrane segment at 125–141 (GFMLRQFELARSVQLRP) threads the bilayer. Residues Gln-130 and Asn-143 each coordinate pheophytin a. The helical transmembrane segment at 153–166 (VFISVFFIYPLGQS) threads the bilayer. His-198 provides a ligand contact to chlorophyll a. A helical transmembrane segment spans residues 208-228 (AALLCAIHGATVENTLFEDGD). Residues His-215 and Phe-262 each contribute to the a plastoquinone site. A Fe cation-binding site is contributed by His-215. A Fe cation-binding site is contributed by His-269. A helical transmembrane segment spans residues 279–295 (GLWMSALGVVGLALNLR).

It belongs to the reaction center PufL/M/PsbA/D family. In terms of assembly, PSII is composed of 1 copy each of membrane proteins PsbA, PsbB, PsbC, PsbD, PsbE, PsbF, PsbH, PsbI, PsbJ, PsbK, PsbL, PsbM, PsbT, PsbX, PsbY, PsbZ, Psb30/Ycf12, at least 3 peripheral proteins of the oxygen-evolving complex and a large number of cofactors. It forms dimeric complexes. Requires The D1/D2 heterodimer binds P680, chlorophylls that are the primary electron donor of PSII, and subsequent electron acceptors. It shares a non-heme iron and each subunit binds pheophytin, quinone, additional chlorophylls, carotenoids and lipids. There is also a Cl(-1) ion associated with D1 and D2, which is required for oxygen evolution. The PSII complex binds additional chlorophylls, carotenoids and specific lipids. as cofactor.

The protein localises to the plastid membrane. It carries out the reaction 2 a plastoquinone + 4 hnu + 2 H2O = 2 a plastoquinol + O2. Photosystem II (PSII) is a light-driven water:plastoquinone oxidoreductase that uses light energy to abstract electrons from H(2)O, generating O(2) and a proton gradient subsequently used for ATP formation. It consists of a core antenna complex that captures photons, and an electron transfer chain that converts photonic excitation into a charge separation. The D1/D2 (PsbA/PsbD) reaction center heterodimer binds P680, the primary electron donor of PSII as well as several subsequent electron acceptors. D2 is needed for assembly of a stable PSII complex. This is Photosystem II D2 protein from Cuscuta reflexa (Southern Asian dodder).